Consider the following 443-residue polypeptide: Glutamate--tRNA ligase 1 (443 aa).

Positions P7 to N17 match the 'HIGH' region motif. A 'KMSKS' region motif is present at residues K236–R240. ATP is bound at residue K239.

This sequence belongs to the class-I aminoacyl-tRNA synthetase family. Glutamate--tRNA ligase type 1 subfamily. As to quaternary structure, monomer.

It localises to the cytoplasm. The enzyme catalyses tRNA(Glu) + L-glutamate + ATP = L-glutamyl-tRNA(Glu) + AMP + diphosphate. Its function is as follows. Catalyzes the attachment of glutamate to tRNA(Glu) in a two-step reaction: glutamate is first activated by ATP to form Glu-AMP and then transferred to the acceptor end of tRNA(Glu). The sequence is that of Glutamate--tRNA ligase 1 from Ehrlichia chaffeensis (strain ATCC CRL-10679 / Arkansas).